A 462-amino-acid chain; its full sequence is MASNSSSCPTPGGGHLNGYPVPPYAFFFPPMLGGLSPPGALTTLQHQLPVSGYSTPSPATIETQSSSSEEIVPSPPSPPPLPRIYKPCFVCQDKSSGYHYGVSACEGCKGFFRRSIQKNMVYTCHRDKNCIINKVTRNRCQYCRLQKCFEVGMSKESVRNDRNKKKKEVPKPECSESYTLTPEVGELIEKVRKAHQETFPALCQLGKYTTNNSSEQRVSLDIDLWDKFSELSTKCIIKTVEFAKQLPGFTTLTIADQITLLKAACLDILILRICTRYTPEQDTMTFSDGLTLNRTQMHNAGFGPLTDLVFAFANQLLPLEMDDAETGLLSAICLICGDRQDLEQPDRVDMLQEPLLEALKVYVRKRRPSRPHMFPKMLMKITDLRSISAKGAERVITLKMEIPGSMPPLIQEMLENSEGLDTLSGQPGGGGRDGGGLAPPPGSCSPSLSPSSNRSSPATHSP.

The interval 1-87 (MASNSSSCPT…PPPLPRIYKP (87 aa)) is modulating. Residues 52-64 (GYSTPSPATIETQ) are compositionally biased toward polar residues. Positions 52–77 (GYSTPSPATIETQSSSSEEIVPSPPS) are disordered. Ser-77 is subject to Phosphoserine; by CDK7. 2 NR C4-type zinc fingers span residues 88 to 108 (CFVC…CEGC) and 124 to 148 (CHRD…LQKC). Residues 88–153 (CFVCQDKSSG…RLQKCFEVGM (66 aa)) constitute a DNA-binding region (nuclear receptor). Ser-96 is modified (phosphoserine; by PKB/AKT1). The hinge stretch occupies residues 154-182 (SKESVRNDRNKKKKEVPKPECSESYTLTP). Residues Lys-166 and Lys-171 each participate in a glycyl lysine isopeptide (Lys-Gly) (interchain with G-Cter in SUMO) cross-link. Residues 183 to 417 (EVGELIEKVR…PLIQEMLENS (235 aa)) form the NR LBD domain. Phosphoserine; by PKA is present on Ser-219. Residue Cys-235 participates in all-trans-retinoate binding. A UBR5-degron motif is present at residues 254–258 (IADQI). An all-trans-retinoate-binding site is contributed by Ser-287. The residue at position 369 (Ser-369) is a Phosphoserine; by PKA. Lys-399 is covalently cross-linked (Glycyl lysine isopeptide (Lys-Gly) (interchain with G-Cter in SUMO)). Positions 404–419 (GSMPPLIQEMLENSEG) are required for binding corepressor NCOR1. The short motif at 408-416 (PLIQEMLEN) is the 9aaTAD element. Residues 419-462 (GLDTLSGQPGGGGRDGGGLAPPPGSCSPSLSPSSNRSSPATHSP) form a disordered region. A compositionally biased stretch (gly residues) spans 426–437 (QPGGGGRDGGGL). Positions 444-462 (CSPSLSPSSNRSSPATHSP) are enriched in low complexity.

This sequence belongs to the nuclear hormone receptor family. NR1 subfamily. In terms of assembly, heterodimer; with RXRA (via C-terminus); association with RXRA is enhanced by pulsatile shear stress. Binds DNA preferentially as a heterodimer. RXRA serves as enhancer to induce RARA binding to RARE. Interacts with RXRG. Interacts with coactivators NCOA3 and NCOA6. Interacts with NCOA7; the interaction requires ligand-binding. Interacts (via the ligand-binding domain) with PRAME; the interaction is ligand (retinoic acid)-dependent. Interacts with AKT1; the interaction phosphorylates RARA and represses transactivation. Interacts with PRKAR1A; the interaction negatively regulates RARA transcriptional activity. Interacts with NCOR1 and NCOR2. Interacts with PRMT2. Interacts with LRIF1. Interacts with ASXL1 and NCOA1. Interacts with ACTN4. In a complex with HDAC3, HDAC5 and HDAC7; the HDACs serve as corepressors of RARA, causing its deacetylation and inhibition of RARE DNA element binding; association with HDAC3, HDAC5 and HDAC7 is increased upon oscillatory shear stress. Interacts with CDK7. In the absence of hormonal ligand, interacts with TACC1. Phosphorylated on serine and threonine residues. Phosphorylation does not change during cell cycle. Phosphorylation on Ser-77 is crucial for transcriptional activity. Phosphorylation by AKT1 is required for the repressor activity but has no effect on DNA binding, protein stability nor subcellular localization. Phosphorylated by PKA in vitro. This phosphorylation on Ser-219 and Ser-369 is critical for ligand binding, nuclear localization and transcriptional activity in response to FSH signaling. Post-translationally, sumoylated with SUMO2, mainly on Lys-399 which is also required for SENP6 binding. On all-trans retinoic acid (ATRA) binding, a conformational change may occur that allows sumoylation on two additional site, Lys-166 and Lys-171. Probably desumoylated by SENP6. Sumoylation levels determine nuclear localization and regulate ATRA-mediated transcriptional activity. In terms of processing, trimethylation enhances heterodimerization with RXRA and positively modulates the transcriptional activation. Ubiquitinated by UBR5, leading to its degradation: UBR5 specifically recognizes and binds ligand-bound RARA when it is not associated with coactivators (NCOAs). In presence of NCOAs, the UBR5-degron is not accessible, preventing its ubiquitination and degradation. Post-translationally, acetylated; acetylation is increased upon pulsatile shear stress and decreased upon oscillatory shear stress. As to expression, expressed in monocytes.

The protein localises to the nucleus. It localises to the cytoplasm. Receptor for retinoic acid. Retinoic acid receptors bind as heterodimers to their target response elements in response to their ligands, all-trans or 9-cis retinoic acid, and regulate gene expression in various biological processes. The RXR/RAR heterodimers bind to the retinoic acid response elements (RARE) composed of tandem 5'-AGGTCA-3' sites known as DR1-DR5. In the absence of ligand, the RXR-RAR heterodimers associate with a multiprotein complex containing transcription corepressors that induce histone deacetylation, chromatin condensation and transcriptional suppression. On ligand binding, the corepressors dissociate from the receptors and associate with the coactivators leading to transcriptional activation. Formation of a complex with histone deacetylases might lead to inhibition of RARE DNA element binding and to transcriptional repression. Transcriptional activation and RARE DNA element binding might be supported by the transcription factor KLF2. RARA plays an essential role in the regulation of retinoic acid-induced germ cell development during spermatogenesis. Has a role in the survival of early spermatocytes at the beginning prophase of meiosis. In Sertoli cells, may promote the survival and development of early meiotic prophase spermatocytes. In concert with RARG, required for skeletal growth, matrix homeostasis and growth plate function. Together with RXRA, positively regulates microRNA-10a expression, thereby inhibiting the GATA6/VCAM1 signaling response to pulsatile shear stress in vascular endothelial cells. In association with HDAC3, HDAC5 and HDAC7 corepressors, plays a role in the repression of microRNA-10a and thereby promotes the inflammatory response. The protein is Retinoic acid receptor alpha (RARA) of Homo sapiens (Human).